Consider the following 333-residue polypeptide: MIDLRSDTVTRPSRAMLEAMMAAPVGDDVYGDDPTVNALQDYAAELSGKEAAIFLPTGTQANLVALLSHCERGEEYIVGQAAHNYLFEAGGAAVLGSIQPQPIDAAADGTLPLDKVAMKIKPDDIHFARTKLLSLENTHNGKVLPREYLKEAWEFTRERNLALHVDGARIFNAVVAYGCELKEITQYCDSFTICLSKGLGTPVGSLLVGNRDYIKRAIRWRKMTGGGMRQSGILAAAGIYALKNNVARLQEDHDNAAWMAEQLREAGADVMRQDTNMLFVRVGEENAAALGEYMKARNVLINASPIVRLVTHLDVSREQLAEVAAHWRAFLAR.

Lys-197 is subject to N6-(pyridoxal phosphate)lysine.

It belongs to the threonine aldolase family. Homotetramer. It depends on pyridoxal 5'-phosphate as a cofactor.

It carries out the reaction L-threonine = acetaldehyde + glycine. The enzyme catalyses L-allo-threonine = acetaldehyde + glycine. Functionally, catalyzes the cleavage of L-allo-threonine and L-threonine to glycine and acetaldehyde. L-threo-phenylserine and L-erythro-phenylserine are also good substrates. In Escherichia coli (strain K12), this protein is Low specificity L-threonine aldolase (ltaE).